The sequence spans 1938 residues: MTDAQMADFGAAAQYLRKSEKERLEAQTRPFDIRTECFVPDDKEEYVKAKVVSREGGKVTAETENGKTVTIKEDQVMQQNPPKFDKIEDMAMLTFLHEPAVLYNLKERYAAWMIYTYSGLFCVTVNPYKWLPVYNAEVVAAYRGKKRSEAPPHIFSISDNAYQYMLTDRENQSILITGESGAGKTVNTKRVIQYFASIAAIGDRSKKENPNANKGTLEDQIIQANPALEAFGNAKTVRNDNSSRFGKFIRIHFGATGKLASADIETYLLEKSRVIFQLKAERNYHIFYQILSNKKPELLDMLLVTNNPYDYAFVSQGEVSVASIDDSEELLATDSAFDVLSFTAEEKAGVYKLTGAIMHYGNMKFKQKQREEQAEPDGTEDADKSAYLMGLNSADLLKGLCHPRVKVGNEYVTKGQSVQQVYYSIGALAKSVYEKMFNWMVTRINATLETKQPRQYFIGVLDIAGFEIFDFNSFEQLCINFTNEKLQQFFNHHMFVLEQEEYKKEGIEWEFIDFGMDLQACIDLIEKPMGIMSILEEECMFPKASDMTFKAKLYDNHLGKSNNFQKPRNVKGKQEAHFSLVHYAGTVDYNIMGWLEKNKDPLNETVVGLYQKSSLKLMATLFSTYASADTGDSGKGKGGKKKGSSFQTVSALHRENLNKLMTNLKTTHPHFVRCIIPNERKAPGVMDNPLVMHQLRCNGVLEGIRICRKGFPNRILYGDFRQRYRILNPAAIPEGQFIDSRKGAEKLLGSLDIDHNQYKFGHTKVFFKAGLLGLLEEMRDERLSRIITRIQAQARGQLMRIEFKKIVERRDALLVIQWNIRAFMGVKNWPWMKLYFKIKPLLKSAETEKEMANMKEEFGRVKDALEKSEARRKELEEKMVSLLQEKNDLQLQVQAEQDNLNDAEERCDQLIKNKIQLEAKVKEMTERLEDEEEMNAELTAKKRKLEDECSELKKDIDDLELTLAKVEKEKHATENKVKNLTEEMAGLDEIIAKLTKEKKALQEAHQQALDDLQAEEDKVNTLTKSKVKLEQQVDDLEGSLEQEKKVRMDLERAKRKLEGDLKLTQESIMDLENDKLQLEEKLKKKEFDISQQNSKIEDEQALALQLQKKLKENQARIEELEEELEAERTARAKVEKLRSDLSRELEEISERLEEAGGATSVQIEMNKKREAEFQKMRRDLEEATLQHEATAAALRKKHADSVAELGEQIDNLQRVKQKLEKEKSEFKLELDDVTSNMEQIIKAKANLEKVSRTLEDQANEYRVKLEEAQRSLNDFTTQRAKLQTENGELARQLEEKEALISQLTRGKLSYTQQMEDLKRQLEEEGKAKNALAHALQSSRHDCDLLREQYEEEMEAKAELQRVLSKANSEVAQWRTKYETDAIQRTEELEEAKKKLAQRLQDAEEAVEAVNAKCSSLEKTKHRLQNEIEDLMVDVERSNAAAAALDKKQRNFDKILAEWKQKYEESQSELESSQKEARSLSTELFKLKNAYEESLEHLETFKRENKNLQEEISDLTEQLGEGGKNVHELEKIRKQLEVEKLELQSALEEAEASLEHEEGKILRAQLEFNQIKAEIERKLAEKDEEMEQAKRNHLRMVDSLQTSLDAETRSRNEALRVKKKMEGDLNEMEIQLSQANRIASEAQKHLKNSQAHLKDTQLQLDDAVHANDDLKENIAIVERRNNLLQAELEELRAVVEQTERSRKLAEQELIETSERVQLLHSQNTSLINQKKKMESDLTQLQTEVEEAVQECRNAEEKAKKAITDAAMMAEELKKEQDTSAHLERMKKNMEQTIKDLQHRLDEAEQIALKGGKKQLQKLEARVRELENELEAEQKRNAESVKGMRKSERRIKELTYQTEEDKKNLMRLQDLVDKLQLKVKAYKRQAEEAEEQANTNLSKFRKVQHELDEAEERADIAESQVNKLRAKSRDIGAKKMHDEE.

A Myosin N-terminal SH3-like domain is found at 32–81; that stretch reads DIRTECFVPDDKEEYVKAKVVSREGGKVTAETENGKTVTIKEDQVMQQNP. The region spanning 85–780 is the Myosin motor domain; sequence DKIEDMAMLT…LLGLLEEMRD (696 aa). N6,N6,N6-trimethyllysine is present on K129. 178–185 contacts ATP; it reads GESGAGKT. A Phosphothreonine modification is found at T379. S417 is subject to Phosphoserine. Actin-binding regions lie at residues 657 to 679 and 759 to 773; these read LNKL…IPNE and KFGH…GLLG. One can recognise an IQ domain in the interval 783–812; that stretch reads LSRIITRIQAQARGQLMRIEFKKIVERRDA. 2 calmodulin-binding regions span residues 790-807 and 816-833; these read IQAQ…KKIV and IQWN…PWMK. Residues 842–1938 adopt a coiled-coil conformation; that stretch reads LKSAETEKEM…IGAKKMHDEE (1097 aa). Phosphoserine occurs at positions 1090 and 1139. Y1261 carries the post-translational modification Phosphotyrosine. Phosphoserine is present on S1271. Phosphothreonine occurs at positions 1277 and 1284. S1309 carries the post-translational modification Phosphoserine. Y1310 is subject to Phosphotyrosine. The residue at position 1311 (T1311) is a Phosphothreonine. Position 1512 is a phosphoserine (S1512). T1515 carries the post-translational modification Phosphothreonine. Residues 1909 to 1938 are disordered; that stretch reads EERADIAESQVNKLRAKSRDIGAKKMHDEE. The span at 1925–1938 shows a compositional bias: basic and acidic residues; it reads KSRDIGAKKMHDEE.

The protein belongs to the TRAFAC class myosin-kinesin ATPase superfamily. Myosin family. In terms of assembly, muscle myosin is a hexameric protein that consists of 2 heavy chain subunits (MHC), 2 alkali light chain subunits (MLC) and 2 regulatory light chain subunits (MLC-2).

It localises to the cytoplasm. The protein localises to the myofibril. Functionally, muscle contraction. The polypeptide is Myosin-6 (Myh6) (Mus musculus (Mouse)).